The sequence spans 513 residues: Activin receptor type-2A (513 aa).

An N-terminal signal peptide occupies residues 1–19 (MGAATKLAFAVFLISCSSG). Topologically, residues 20-139 (AILGRSETQE…VTPKPPLFNT (120 aa)) are extracellular. Disulfide bonds link cysteine 30-cysteine 60, cysteine 50-cysteine 78, cysteine 85-cysteine 104, cysteine 91-cysteine 103, and cysteine 105-cysteine 110. Residues asparagine 43 and asparagine 66 are each glycosylated (N-linked (GlcNAc...) asparagine). The helical transmembrane segment at 140–160 (LLYSLVPIMGIAVIVLFSFWM) threads the bilayer. Over 161-513 (YRHHKLAYPP…VDFPPKESSL (353 aa)) the chain is Cytoplasmic. In terms of domain architecture, Protein kinase spans 192–485 (LQLLEIKARG…EERIIQMQKL (294 aa)). Residues 198-206 (KARGRFGCV) and lysine 219 each bind ATP. The active-site Proton acceptor is aspartate 322.

This sequence belongs to the protein kinase superfamily. TKL Ser/Thr protein kinase family. TGFB receptor subfamily. It depends on Mg(2+) as a cofactor. Mn(2+) is required as a cofactor. As to expression, expressed in hen anterior pituitary during the ovulatory cycle and in the ovarian follicle.

The protein resides in the cell membrane. It carries out the reaction L-threonyl-[receptor-protein] + ATP = O-phospho-L-threonyl-[receptor-protein] + ADP + H(+). It catalyses the reaction L-seryl-[receptor-protein] + ATP = O-phospho-L-seryl-[receptor-protein] + ADP + H(+). On ligand binding, forms a receptor complex consisting of two type II and two type I transmembrane serine/threonine kinases. Type II receptors phosphorylate and activate type I receptors which autophosphorylate, then bind and activate SMAD transcriptional regulators. Receptor for activin A, activin B and inhibin A. May modulate neuropeptide expression in dorsal root ganglia (DRG) neurons and ovarian follicle development. This chain is Activin receptor type-2A (ACVR2A), found in Gallus gallus (Chicken).